The primary structure comprises 427 residues: 3-phosphoshikimate 1-carboxyvinyltransferase (427 aa).

The 3-phosphoshikimate site is built by Lys-22, Ser-23, and Arg-27. Position 22 (Lys-22) interacts with phosphoenolpyruvate. Residues Gly-96 and Arg-124 each coordinate phosphoenolpyruvate. The 3-phosphoshikimate site is built by Ser-170, Ser-171, Gln-172, Ser-198, Asp-314, Asn-337, and Lys-341. Residue Gln-172 coordinates phosphoenolpyruvate. Asp-314 (proton acceptor) is an active-site residue. Phosphoenolpyruvate is bound by residues Arg-345, Arg-387, and Lys-412.

The protein belongs to the EPSP synthase family. As to quaternary structure, monomer.

It is found in the cytoplasm. It catalyses the reaction 3-phosphoshikimate + phosphoenolpyruvate = 5-O-(1-carboxyvinyl)-3-phosphoshikimate + phosphate. Its pathway is metabolic intermediate biosynthesis; chorismate biosynthesis; chorismate from D-erythrose 4-phosphate and phosphoenolpyruvate: step 6/7. Its function is as follows. Catalyzes the transfer of the enolpyruvyl moiety of phosphoenolpyruvate (PEP) to the 5-hydroxyl of shikimate-3-phosphate (S3P) to produce enolpyruvyl shikimate-3-phosphate and inorganic phosphate. In Tolumonas auensis (strain DSM 9187 / NBRC 110442 / TA 4), this protein is 3-phosphoshikimate 1-carboxyvinyltransferase.